Consider the following 279-residue polypeptide: Large ribosomal subunit protein uL2 (279 aa).

Residues N202–G279 form a disordered region. Over residues G209 to N220 the composition is skewed to basic residues.

Belongs to the universal ribosomal protein uL2 family. Part of the 50S ribosomal subunit. Forms a bridge to the 30S subunit in the 70S ribosome.

One of the primary rRNA binding proteins. Required for association of the 30S and 50S subunits to form the 70S ribosome, for tRNA binding and peptide bond formation. It has been suggested to have peptidyltransferase activity; this is somewhat controversial. Makes several contacts with the 16S rRNA in the 70S ribosome. The sequence is that of Large ribosomal subunit protein uL2 from Methylocella silvestris (strain DSM 15510 / CIP 108128 / LMG 27833 / NCIMB 13906 / BL2).